Consider the following 283-residue polypeptide: Nucleotide-binding protein Hore_15880 (283 aa).

Residue 8–15 (GMSGAGKS) coordinates ATP. Residue 57-60 (DIRG) participates in GTP binding.

The protein belongs to the RapZ-like family.

Functionally, displays ATPase and GTPase activities. The sequence is that of Nucleotide-binding protein Hore_15880 from Halothermothrix orenii (strain H 168 / OCM 544 / DSM 9562).